The sequence spans 504 residues: Probable cytosol aminopeptidase (504 aa).

Mn(2+)-binding residues include Lys-276 and Asp-281. Lys-288 is a catalytic residue. 3 residues coordinate Mn(2+): Asp-299, Asp-358, and Glu-360. Arg-362 is a catalytic residue.

This sequence belongs to the peptidase M17 family. The cofactor is Mn(2+).

It localises to the cytoplasm. The catalysed reaction is Release of an N-terminal amino acid, Xaa-|-Yaa-, in which Xaa is preferably Leu, but may be other amino acids including Pro although not Arg or Lys, and Yaa may be Pro. Amino acid amides and methyl esters are also readily hydrolyzed, but rates on arylamides are exceedingly low.. It catalyses the reaction Release of an N-terminal amino acid, preferentially leucine, but not glutamic or aspartic acids.. Its function is as follows. Presumably involved in the processing and regular turnover of intracellular proteins. Catalyzes the removal of unsubstituted N-terminal amino acids from various peptides. This chain is Probable cytosol aminopeptidase, found in Bordetella avium (strain 197N).